Here is a 453-residue protein sequence, read N- to C-terminus: Dibenzothiophene-sulfone monooxygenase (453 aa).

Positions 59, 106, 156, 160, and 231 each coordinate FMN.

The protein belongs to the NtaA/SnaA/DszA monooxygenase family. Homodimer.

The protein resides in the cytoplasm. It catalyses the reaction dibenzothiophene 5,5-dioxide + FMNH2 + NADH + O2 = 2'-hydroxybiphenyl-2-sulfinate + FMN + NAD(+) + H2O + H(+). It functions in the pathway sulfur metabolism; dibenzothiophene degradation. Catalyzes the second step of the '4S' desulfurization pathway that removes covalently bound sulfur from dibenzothiophene (DBT) without breaking carbon-carbon bonds. Metabolizes DBT-sulfone (DBTO2 or DBT 5,5-dioxide) to 2-(2'-hydroxyphenyl)benzene sulphinate (HBPS). The sequence is that of Dibenzothiophene-sulfone monooxygenase from Rhodococcus erythropolis (Arthrobacter picolinophilus).